Consider the following 225-residue polypeptide: UPF0758 protein Sez_1052 (225 aa).

Positions 102–224 (PVLSSAQVAE…YYSFREKSDL (123 aa)) constitute an MPN domain. H173, H175, and D186 together coordinate Zn(2+). The JAMM motif motif lies at 173–186 (HNHPSGLTKPSAND).

The protein belongs to the UPF0758 family.

This is UPF0758 protein Sez_1052 from Streptococcus equi subsp. zooepidemicus (strain MGCS10565).